A 201-amino-acid chain; its full sequence is Holliday junction branch migration complex subunit RuvA (201 aa).

The tract at residues 1–63 is domain I; sequence MIEFVRGYVD…EDTLALYGFR (63 aa). The segment at 64–142 is domain II; it reads TREERTLFAK…AVTAKTFPDL (79 aa). A flexible linker region spans residues 143-153; the sequence is FHLQEESARPH. The segment at 153–201 is domain III; that stretch reads HLSALEEAIEALKALGYAEREIQKVVPSLMKENLSTDQYVKRALQQLLK.

This sequence belongs to the RuvA family. As to quaternary structure, homotetramer. Forms an RuvA(8)-RuvB(12)-Holliday junction (HJ) complex. HJ DNA is sandwiched between 2 RuvA tetramers; dsDNA enters through RuvA and exits via RuvB. An RuvB hexamer assembles on each DNA strand where it exits the tetramer. Each RuvB hexamer is contacted by two RuvA subunits (via domain III) on 2 adjacent RuvB subunits; this complex drives branch migration. In the full resolvosome a probable DNA-RuvA(4)-RuvB(12)-RuvC(2) complex forms which resolves the HJ.

The protein resides in the cytoplasm. In terms of biological role, the RuvA-RuvB-RuvC complex processes Holliday junction (HJ) DNA during genetic recombination and DNA repair, while the RuvA-RuvB complex plays an important role in the rescue of blocked DNA replication forks via replication fork reversal (RFR). RuvA specifically binds to HJ cruciform DNA, conferring on it an open structure. The RuvB hexamer acts as an ATP-dependent pump, pulling dsDNA into and through the RuvAB complex. HJ branch migration allows RuvC to scan DNA until it finds its consensus sequence, where it cleaves and resolves the cruciform DNA. The protein is Holliday junction branch migration complex subunit RuvA of Geobacillus sp. (strain WCH70).